A 415-amino-acid polypeptide reads, in one-letter code: Multidrug resistance protein MdtA (415 aa).

The signal sequence occupies residues 1 to 21 (MKGSYKSRWVIVIVVVIAAIA). Disordered stretches follow at residues 32–56 (SRSA…GMRA) and 392–415 (EAQS…GARS). The span at 399-415 (SEEKATSREYAKKGARS) shows a compositional bias: basic and acidic residues.

It belongs to the membrane fusion protein (MFP) (TC 8.A.1) family. As to quaternary structure, part of a tripartite efflux system composed of MdtA, MdtB and MdtC.

The protein localises to the cell inner membrane. The MdtABC tripartite complex confers resistance against novobiocin and deoxycholate. In Escherichia coli O7:K1 (strain IAI39 / ExPEC), this protein is Multidrug resistance protein MdtA.